Here is a 537-residue protein sequence, read N- to C-terminus: Zinc finger protein 703 (537 aa).

Disordered stretches follow at residues 1-38, 90-254, and 300-323; these read MNCSPPGSSTDTERQSSSSGTPVAPRPTLAPTHPLRQA, SQIG…VAPV, and VGNQLPGTLGLPGKPPSSSPLTGA. The segment covering 101-111 has biased composition (polar residues); it reads SKLNSVTSSGL. Residues 149 to 158 show a composition bias toward low complexity; it reads GSSSGGAADK. The segment covering 176–185 has biased composition (polar residues); it reads SPSSRVSSPG. Residues 188-203 show a composition bias toward basic and acidic residues; it reads CDSKNNESQEKKEPEA. Over residues 205-220 the composition is skewed to polar residues; the sequence is KANSETSQVNPTLTRA. A compositionally biased stretch (low complexity) spans 221 to 232; the sequence is STSNSSAESSQS. A C2H2-type zinc finger spans residues 409–437; the sequence is HICNWVSASGPCDKRFSTSEELLAHLRTH.

It belongs to the Elbow/Noc family.

Its subcellular location is the nucleus. The protein resides in the cytoplasm. In terms of biological role, transcriptional corepressor which does not bind directly to DNA and may regulate transcription through recruitment of histone deacetylases to gene promoters. Regulates cell adhesion, migration and proliferation. Involved in specification of the lateral neural plate border (NPB). May be required for segmental gene expression during hindbrain development. The sequence is that of Zinc finger protein 703 (znf703) from Xenopus tropicalis (Western clawed frog).